The primary structure comprises 233 residues: Attacin-B (233 aa).

The first 17 residues, 1-17, serve as a signal peptide directing secretion; it reads MFAKLFLVSVLLVGVNS. Residues 18–46 constitute a propeptide that is removed on maturation; that stretch reads RYVLVEEPGYYDKQYEEQPQQWVNSRVRR.

This sequence belongs to the attacin/sarcotoxin-2 family.

The protein resides in the secreted. In terms of biological role, hemolymph antibacterial protein. This Hyalophora cecropia (Cecropia moth) protein is Attacin-B.